We begin with the raw amino-acid sequence, 278 residues long: Large ribosomal subunit protein uL2 (278 aa).

2 disordered regions span residues 29-53 and 223-278; these read PEKS…TTRH and GVAM…GKKR. Residues 255–268 show a composition bias toward basic and acidic residues; sequence GRTRRPGKESDKLI. Residues 269–278 show a composition bias toward basic residues; the sequence is VRRRRTGKKR.

It belongs to the universal ribosomal protein uL2 family. As to quaternary structure, part of the 50S ribosomal subunit. Forms a bridge to the 30S subunit in the 70S ribosome.

In terms of biological role, one of the primary rRNA binding proteins. Required for association of the 30S and 50S subunits to form the 70S ribosome, for tRNA binding and peptide bond formation. It has been suggested to have peptidyltransferase activity; this is somewhat controversial. Makes several contacts with the 16S rRNA in the 70S ribosome. The protein is Large ribosomal subunit protein uL2 of Kineococcus radiotolerans (strain ATCC BAA-149 / DSM 14245 / SRS30216).